A 254-amino-acid chain; its full sequence is 14-3-3 protein 2 (254 aa).

The protein belongs to the 14-3-3 family. In terms of assembly, homodimer.

This is 14-3-3 protein 2 (TFT2) from Solanum lycopersicum (Tomato).